We begin with the raw amino-acid sequence, 249 residues long: tRNA (guanine-N(1)-)-methyltransferase (249 aa).

S-adenosyl-L-methionine contacts are provided by residues glycine 113 and 133-138 (IGDFVV).

The protein belongs to the RNA methyltransferase TrmD family. Homodimer.

It is found in the cytoplasm. It catalyses the reaction guanosine(37) in tRNA + S-adenosyl-L-methionine = N(1)-methylguanosine(37) in tRNA + S-adenosyl-L-homocysteine + H(+). In terms of biological role, specifically methylates guanosine-37 in various tRNAs. The polypeptide is tRNA (guanine-N(1)-)-methyltransferase (Neisseria gonorrhoeae (strain ATCC 700825 / FA 1090)).